A 549-amino-acid chain; its full sequence is Teichoic acids export ATP-binding protein TagH (549 aa).

The 222-residue stretch at 22 to 243 (DKLKDLFRKQ…YRAFLKEYNQ (222 aa)) folds into the ABC transporter domain. 57-64 (GLNGSGKS) is an ATP binding site. The tract at residues 244–549 (MSMEDRKKFQ…EIQSISIVKK (306 aa)) is unknown. The SH3b domain maps to 346–415 (ENMYMVKSNG…VSTKFIEPFK (70 aa)).

This sequence belongs to the ABC transporter superfamily. Teichoic acids exporter (TC 3.A.1.104.1) family. As to quaternary structure, the complex is composed of two ATP-binding proteins (TagH) and two transmembrane proteins (TagG).

It is found in the cell membrane. It catalyses the reaction ATP + H2O + teichoic acidSide 1 = ADP + phosphate + teichoic acidSide 2.. Its function is as follows. Part of the ABC transporter complex TagGH involved in teichoic acids export. Responsible for energy coupling to the transport system. This is Teichoic acids export ATP-binding protein TagH from Bacillus cereus (strain ZK / E33L).